Consider the following 896-residue polypeptide: Probable sodium/sulfate cotransporter 3 (896 aa).

5 helical membrane passes run 1–21 (MAAI…SFII), 47–69 (IITV…IFLY), 106–126 (VMVL…IPIL), 140–160 (LLIP…IGTS), and 186–206 (MFDI…FIIL). 4 RCK C-terminal domains span residues 212 to 296 (LPGN…EFGL), 319 to 404 (TAFH…FKIN), 408 to 493 (LRFV…FPGL), and 499 to 586 (EQVD…KAFV). A run of 7 helical transmembrane segments spans residues 602 to 622 (MAIG…GGLK), 626 to 646 (YIHL…TGCM), 654 to 674 (AIMW…AALE), 685 to 705 (AIIS…AIYV), 734 to 754 (LKIP…AGFI), 776 to 796 (FATI…FILC), and 804 to 824 (VWIA…LLTL). Residues 857-881 (RAQSFGGKAMSVGSTESRTDGSSTP) form a disordered region. Residues 868–881 (VGSTESRTDGSSTP) show a composition bias toward polar residues.

The protein belongs to the divalent anion:Na+ symporter (DASS) superfamily. Na+/sulfate symporter (TC 2.A.47.4) family.

It localises to the cell membrane. Na(+)/sulfate cotransporter with a probable low-affinity for sulfate. This chain is Probable sodium/sulfate cotransporter 3 (SLT3), found in Chlamydomonas reinhardtii (Chlamydomonas smithii).